The sequence spans 452 residues: MKETQNAREKIKQLLHILIPIFITQAGLSLITFLDTVMSGKVSPADLAGVAIGSSLWTPVYTGLAGILMAVTPIVAQLLGAEKKQKIPFTVLQAVYVAALLSIAVLVIGYAAVDLILGRLNLDIHVHQIAKHFLGFLSLGIFPLFVYTVLRSFIDSLGKTRVTMMITLSSLPINFVLNYVFIFGKFGMPALGGVGAGLASALTYWCICIISFFIIHKNAPFSEYGIFLTMYKFSWKACKNLLKIGLPIGFAVFFETSIFAAVTLLMSHFHTVTIASHQAAMNFASLLYMLPLSVSMALTIVVGFEAGAARFKDARSYSLIGIMMAIGFSLFTAACILLFREQIAGMYTSDPDVLRLTQHFLIYALFFQLSDAVAAPIQGALRGYKDVNYTLAAAFVSYWVIGLPVGYMVGTFTSLGAFGYWIGLIAGLAAGAVGLFFRLAKLQKRYSQKQHI.

The next 12 membrane-spanning stretches (helical) occupy residues 14-34 (LLHILIPIFITQAGLSLITFL), 56-76 (LWTPVYTGLAGILMAVTPIVA), 97-117 (VAALLSIAVLVIGYAAVDLIL), 129-149 (IAKHFLGFLSLGIFPLFVYTV), 164-184 (MMITLSSLPINFVLNYVFIFG), 195-215 (GAGLASALTYWCICIISFFII), 244-264 (IGLPIGFAVFFETSIFAAVTL), 284-304 (ASLLYMLPLSVSMALTIVVGF), 319-339 (LIGIMMAIGFSLFTAACILLF), 360-380 (FLIYALFFQLSDAVAAPIQGA), 392-412 (AAAFVSYWVIGLPVGYMVGTF), and 417-437 (AFGYWIGLIAGLAAGAVGLFF).

This sequence belongs to the multi antimicrobial extrusion (MATE) (TC 2.A.66.1) family.

The protein resides in the cell membrane. Functionally, multidrug efflux pump. The sequence is that of Probable multidrug resistance protein NorM (norM) from Bacillus subtilis (strain 168).